The chain runs to 460 residues: Interleukin-1 receptor-associated kinase 4 (460 aa).

An N-acetylmethionine modification is found at M1. Residues 20-104 (RKLSDFIDPQ…APASLLLPDA (85 aa)) form the Death domain. Residue K34 is modified to N6-acetyllysine. The Protein kinase domain occupies 186–454 (SVGGNKMGEG…PDIKKVQQLL (269 aa)). ATP contacts are provided by residues 192-200 (MGEGGFGVV) and K213. The Proton acceptor role is filled by D311. ATP-binding positions include 313-316 (KSAN) and D329. 2 positions are modified to phosphothreonine: T342 and T345. Position 346 is a phosphoserine (S346).

Belongs to the protein kinase superfamily. TKL Ser/Thr protein kinase family. Pelle subfamily. As to quaternary structure, associates with MYD88 and IRAK2 to form a ternary complex called the Myddosome. Once phosphorylated, IRAK4 dissociates from the receptor complex and then associates with the TNF receptor-associated factor 6 (TRAF6), IRAK1, and PELI1; this intermediate complex is required for subsequent NF-kappa-B activation. Direct binding of SMAD6 to PELI1 prevents complex formation and hence negatively regulates IL1R-TLR signaling and eventually NF-kappa-B-mediated gene expression. Interacts with IL1RL1. Interacts (when phosphorylated) with IRAK1. May interact (when phosphorylated) with IRAK3. It depends on Mg(2+) as a cofactor. Phosphorylated.

The protein resides in the cytoplasm. It carries out the reaction L-seryl-[protein] + ATP = O-phospho-L-seryl-[protein] + ADP + H(+). The enzyme catalyses L-threonyl-[protein] + ATP = O-phospho-L-threonyl-[protein] + ADP + H(+). In terms of biological role, serine/threonine-protein kinase that plays a critical role in initiating innate immune response against foreign pathogens. Involved in Toll-like receptor (TLR) and IL-1R signaling pathways. Is rapidly recruited by MYD88 to the receptor-signaling complex upon TLR activation to form the Myddosome together with IRAK2. Phosphorylates initially IRAK1, thus stimulating the kinase activity and intensive autophosphorylation of IRAK1. Phosphorylates E3 ubiquitin ligases Pellino proteins (PELI1, PELI2 and PELI3) to promote pellino-mediated polyubiquitination of IRAK1. Then, the ubiquitin-binding domain of IKBKG/NEMO binds to polyubiquitinated IRAK1 bringing together the IRAK1-MAP3K7/TAK1-TRAF6 complex and the NEMO-IKKA-IKKB complex. In turn, MAP3K7/TAK1 activates IKKs (CHUK/IKKA and IKBKB/IKKB) leading to NF-kappa-B nuclear translocation and activation. Alternatively, phosphorylates TIRAP to promote its ubiquitination and subsequent degradation. Phosphorylates NCF1 and regulates NADPH oxidase activation after LPS stimulation suggesting a similar mechanism during microbial infections. The protein is Interleukin-1 receptor-associated kinase 4 (IRAK4) of Homo sapiens (Human).